The chain runs to 193 residues: Imidazoleglycerol-phosphate dehydratase (193 aa).

Belongs to the imidazoleglycerol-phosphate dehydratase family.

The protein localises to the cytoplasm. The catalysed reaction is D-erythro-1-(imidazol-4-yl)glycerol 3-phosphate = 3-(imidazol-4-yl)-2-oxopropyl phosphate + H2O. It functions in the pathway amino-acid biosynthesis; L-histidine biosynthesis; L-histidine from 5-phospho-alpha-D-ribose 1-diphosphate: step 6/9. The chain is Imidazoleglycerol-phosphate dehydratase from Staphylococcus carnosus (strain TM300).